The chain runs to 343 residues: Methionine import ATP-binding protein MetN (343 aa).

The ABC transporter domain maps to 2 to 241; that stretch reads IKLSNITKVF…PKTPLAQKFI (240 aa). 40 to 46 contacts ATP; that stretch reads SGAGKST. Residues 265–343 form a C2 domain region; the sequence is CVPMLRLEFT…HVKVEVLGYV (79 aa). L-methionine-binding positions include 278–283 and 295–296; these read VDAPLL and NI.

It belongs to the ABC transporter superfamily. Methionine importer (TC 3.A.1.24) family. As to quaternary structure, the complex is composed of two ATP-binding proteins (MetN), two transmembrane proteins (MetI) and a solute-binding protein (MetQ).

Its subcellular location is the cell inner membrane. It carries out the reaction L-methionine(out) + ATP + H2O = L-methionine(in) + ADP + phosphate + H(+). The enzyme catalyses D-methionine(out) + ATP + H2O = D-methionine(in) + ADP + phosphate + H(+). With respect to regulation, ATPase activity is inhibited by intracellular L-methionine. Binding of methionine to the dimerized C-terminal regulatory domain stabilizes an inward-facing, ATPase-inactive conformation of the transporter, and as a consequence, the rate of ATP hydrolysis decreases. ADP is a competitive inhibitor. Part of the ABC transporter complex MetNIQ involved in methionine import. Responsible for energy coupling to the transport system. It has also been shown to be involved in formyl-L-methionine transport. The chain is Methionine import ATP-binding protein MetN from Escherichia coli (strain K12).